A 740-amino-acid polypeptide reads, in one-letter code: Ion-translocating oxidoreductase complex subunit C (740 aa).

4Fe-4S ferredoxin-type domains lie at 369-397 (GEPQ…QQLY) and 407-436 (KATT…VQYF). [4Fe-4S] cluster is bound by residues C377, C380, C383, C387, C416, C419, C422, and C426. The tract at residues 602-717 (KLEQQQANAE…PEEQVDPRKA (116 aa)) is disordered. Composition is skewed to low complexity over residues 605-615 (QQQANAEPEQQ) and 637-647 (QQQANAEPEQQ).

The protein belongs to the 4Fe4S bacterial-type ferredoxin family. RnfC subfamily. In terms of assembly, the complex is composed of six subunits: RsxA, RsxB, RsxC, RsxD, RsxE and RsxG. Requires [4Fe-4S] cluster as cofactor.

It localises to the cell inner membrane. Part of a membrane-bound complex that couples electron transfer with translocation of ions across the membrane. Required to maintain the reduced state of SoxR. This is Ion-translocating oxidoreductase complex subunit C from Escherichia coli (strain ATCC 8739 / DSM 1576 / NBRC 3972 / NCIMB 8545 / WDCM 00012 / Crooks).